The primary structure comprises 618 residues: Transport protein particle subunit trs85-2 (618 aa).

This sequence belongs to the TRS85 family. Part of the multisubunit TRAPP (transport protein particle) complexes I and II.

It is found in the golgi apparatus. The protein localises to the cis-Golgi network. Functionally, component of the TRAPP I and TRAPP II complexes. TRAPP I plays a key role in the late stages of endoplasmic reticulum to Golgi traffic. TRAPP II seems to play a role in intra-Golgi transport. Has a role late in meiosis following DNA replication. The chain is Transport protein particle subunit trs85-2 (trs85-2) from Schizosaccharomyces pombe (strain 972 / ATCC 24843) (Fission yeast).